Reading from the N-terminus, the 686-residue chain is UvrABC system protein C (686 aa).

Residues 1 to 14 show a composition bias toward basic and acidic residues; that stretch reads MVHDSTDDPDDTRV. Positions 1–48 are disordered; sequence MVHDSTDDPDDTRVRKSRRGTALDAPPQETAPPDLDPATTGGDDEDDA. The 80-residue stretch at 81 to 160 folds into the GIY-YIG domain; sequence TSPGVYRMLN…IKQLRPRFNV (80 aa). The UVR domain maps to 270–305; sequence HAVKQELAGEMEKAANELEFETAALYRDRLAALSAI.

It belongs to the UvrC family. As to quaternary structure, interacts with UvrB in an incision complex.

It localises to the cytoplasm. In terms of biological role, the UvrABC repair system catalyzes the recognition and processing of DNA lesions. UvrC both incises the 5' and 3' sides of the lesion. The N-terminal half is responsible for the 3' incision and the C-terminal half is responsible for the 5' incision. The chain is UvrABC system protein C from Bradyrhizobium diazoefficiens (strain JCM 10833 / BCRC 13528 / IAM 13628 / NBRC 14792 / USDA 110).